A 415-amino-acid polypeptide reads, in one-letter code: DNA polymerase IV (415 aa).

Positions 15–196 (ILHVDMNCFF…LPVGAMHGIG (182 aa)) constitute a UmuC domain. Residues Asp19 and Asp115 each coordinate Mg(2+). Glu116 is a catalytic residue. The interval 238–260 (KGMDDRQVDPSQMGQHKSVGNSM) is disordered. The segment covering 246 to 260 (DPSQMGQHKSVGNSM) has biased composition (polar residues).

Belongs to the DNA polymerase type-Y family. Monomer. Mg(2+) serves as cofactor.

It localises to the cytoplasm. The enzyme catalyses DNA(n) + a 2'-deoxyribonucleoside 5'-triphosphate = DNA(n+1) + diphosphate. Poorly processive, error-prone DNA polymerase involved in untargeted mutagenesis. Copies undamaged DNA at stalled replication forks, which arise in vivo from mismatched or misaligned primer ends. These misaligned primers can be extended by PolIV. Exhibits no 3'-5' exonuclease (proofreading) activity. May be involved in translesional synthesis, in conjunction with the beta clamp from PolIII. The chain is DNA polymerase IV from Bacillus cereus (strain ZK / E33L).